The following is a 251-amino-acid chain: Endoglucanase CX (251 aa).

Belongs to the glycosyl hydrolase 9 (cellulase E) family.

The enzyme catalyses Endohydrolysis of (1-&gt;4)-beta-D-glucosidic linkages in cellulose, lichenin and cereal beta-D-glucans.. In terms of biological role, degrades carboxymethylcellulose (CMC). This Prunus persica (Peach) protein is Endoglucanase CX.